A 258-amino-acid chain; its full sequence is Trans-aconitate 2-methyltransferase (258 aa).

It belongs to the methyltransferase superfamily. Tam family.

It localises to the cytoplasm. It carries out the reaction trans-aconitate + S-adenosyl-L-methionine = (E)-3-(methoxycarbonyl)pent-2-enedioate + S-adenosyl-L-homocysteine. Catalyzes the S-adenosylmethionine monomethyl esterification of trans-aconitate. The chain is Trans-aconitate 2-methyltransferase from Yersinia pseudotuberculosis serotype O:1b (strain IP 31758).